A 78-amino-acid chain; its full sequence is High temperature lethal protein 1 (78 aa).

At Ser2 the chain carries N-acetylserine.

In terms of assembly, interacts directly with RSC8. Component of the two forms of the RSC complex composed of at least either RSC1 or RSC2, and ARP7, ARP9, LDB7, NPL6, RSC3, RSC30, RSC4, RSC58, RSC6, RSC8, RSC9, SFH1, STH1, HTL1 and probably RTT102. The complexes interact with histone and histone variant components of centromeric chromatin. Component of a fungal-specific module (HTL1-LDB7-NPL6-RSC3-RSC30) within the RSC complex.

The protein localises to the nucleus. In terms of biological role, required for cell cycle progression through G2/M transition at temperatures higher than 33 degrees Celsius. Component of the chromatin structure-remodeling complex (RSC), which is involved in transcription regulation and nucleosome positioning. RSC is responsible for the transfer of a histone octamer from a nucleosome core particle to naked DNA. The reaction requires ATP and involves an activated RSC-nucleosome intermediate. Remodeling reaction also involves DNA translocation, DNA twist and conformational change. As a reconfigurer of centromeric and flanking nucleosomes, RSC complex is required both for proper kinetochore function in chromosome segregation and, via a PKC1-dependent signaling pathway, for organization of the cellular cytoskeleton. When associated with the RSC complex, may act coordinately with PKC1 to regulate G2/M transition. Together with LDB7, NPL6, RSC3, RSC30 components, defines a fungal-specific module within the RSC complex that plays a role in many cellular functions including the maintenance of cell wall integrity. The sequence is that of High temperature lethal protein 1 (HTL1) from Saccharomyces cerevisiae (strain ATCC 204508 / S288c) (Baker's yeast).